The chain runs to 165 residues: Nucleotide-binding protein Ctha_0558 (165 aa).

The protein belongs to the YajQ family.

Its function is as follows. Nucleotide-binding protein. The sequence is that of Nucleotide-binding protein Ctha_0558 from Chloroherpeton thalassium (strain ATCC 35110 / GB-78).